The sequence spans 196 residues: RNA polymerase II subunit B1 CTD phosphatase RTR2 (196 aa).

An RTR1-type zinc finger spans residues 52–123; sequence YLARLLSPMS…LSQTPLHERR (72 aa). Positions 75, 80, 99, and 103 each coordinate Zn(2+).

Belongs to the RPAP2 family.

The protein localises to the cytoplasm. It is found in the nucleus. The enzyme catalyses O-phospho-L-seryl-[protein] + H2O = L-seryl-[protein] + phosphate. It catalyses the reaction O-phospho-L-threonyl-[protein] + H2O = L-threonyl-[protein] + phosphate. Probable RNA polymerase II subunit B1 C-terminal domain (CTD) phosphatase that regulates RNA polymerase II transcription. May have functional redundancy with RTR1. In Saccharomyces cerevisiae (strain ATCC 204508 / S288c) (Baker's yeast), this protein is RNA polymerase II subunit B1 CTD phosphatase RTR2 (RTR2).